The sequence spans 58 residues: Probable spore germination protein GerPD (58 aa).

Required for the formation of functionally normal spores. Could be involved in the establishment of normal spore coat structure and/or permeability, which allows the access of germinants to their receptor. This Bacillus subtilis (strain 168) protein is Probable spore germination protein GerPD (gerPD).